Here is a 425-residue protein sequence, read N- to C-terminus: Formyl-CoA:oxalate CoA-transferase (425 aa).

Residues 17 to 18 (QS), Arg38, 72 to 75 (LDTK), 96 to 98 (NFG), Arg104, and 136 to 139 (KVYE) each bind CoA. Asp168 functions as the Nucleophile in the catalytic mechanism. 247–249 (GGQ) is a binding site for substrate.

The protein belongs to the CoA-transferase III family. Frc subfamily. Homodimer.

The enzyme catalyses formyl-CoA + oxalate = oxalyl-CoA + formate. It functions in the pathway metabolic intermediate degradation; oxalate degradation; CO(2) and formate from oxalate: step 1/2. Functionally, involved in the catabolism of oxalate and in the adapatation to low pH via the induction of the oxalate-dependent acid tolerance response (ATR). Catalyzes the transfer of the CoA moiety from formyl-CoA to oxalate. This Bradyrhizobium sp. (strain ORS 278) protein is Formyl-CoA:oxalate CoA-transferase.